The chain runs to 100 residues: Small ribosomal subunit protein uS14c (100 aa).

Belongs to the universal ribosomal protein uS14 family. In terms of assembly, part of the 30S ribosomal subunit.

The protein localises to the plastid. Its subcellular location is the chloroplast. Functionally, binds 16S rRNA, required for the assembly of 30S particles. In Emiliania huxleyi (Coccolithophore), this protein is Small ribosomal subunit protein uS14c.